Consider the following 274-residue polypeptide: Putative 2-succinyl-6-hydroxy-2,4-cyclohexadiene-1-carboxylate synthase (274 aa).

An AB hydrolase-1 domain is found at 26–259; it reads AVVCLHGFTG…KAGHTVHVEQ (234 aa).

It belongs to the AB hydrolase superfamily. MenH family. Monomer.

It carries out the reaction 5-enolpyruvoyl-6-hydroxy-2-succinyl-cyclohex-3-ene-1-carboxylate = (1R,6R)-6-hydroxy-2-succinyl-cyclohexa-2,4-diene-1-carboxylate + pyruvate. Its pathway is quinol/quinone metabolism; 1,4-dihydroxy-2-naphthoate biosynthesis; 1,4-dihydroxy-2-naphthoate from chorismate: step 3/7. It participates in quinol/quinone metabolism; menaquinone biosynthesis. Its function is as follows. Catalyzes a proton abstraction reaction that results in 2,5-elimination of pyruvate from 2-succinyl-5-enolpyruvyl-6-hydroxy-3-cyclohexene-1-carboxylate (SEPHCHC) and the formation of 2-succinyl-6-hydroxy-2,4-cyclohexadiene-1-carboxylate (SHCHC). In Bacillus subtilis (strain 168), this protein is Putative 2-succinyl-6-hydroxy-2,4-cyclohexadiene-1-carboxylate synthase.